The sequence spans 107 residues: Ribonuclease P protein component 4 (107 aa).

4 residues coordinate Zn(2+): Cys-62, Cys-65, Cys-87, and Cys-90.

The protein belongs to the eukaryotic/archaeal RNase P protein component 4 family. Consists of a catalytic RNA component and at least 4-5 protein subunits. The cofactor is Zn(2+).

It localises to the cytoplasm. It carries out the reaction Endonucleolytic cleavage of RNA, removing 5'-extranucleotides from tRNA precursor.. In terms of biological role, part of ribonuclease P, a protein complex that generates mature tRNA molecules by cleaving their 5'-ends. The sequence is that of Ribonuclease P protein component 4 from Archaeoglobus fulgidus (strain ATCC 49558 / DSM 4304 / JCM 9628 / NBRC 100126 / VC-16).